The sequence spans 98 residues: Plastocyanin (98 aa).

The Plastocyanin-like domain occupies 1-98 (AQIVKLGGDD…AGMKMTITVQ (98 aa)). Cu(2+) is bound by residues histidine 38, cysteine 83, histidine 86, and methionine 91.

Belongs to the plastocyanin family. Cu(2+) is required as a cofactor.

It localises to the plastid. Its subcellular location is the chloroplast thylakoid membrane. In terms of biological role, participates in electron transfer between P700 and the cytochrome b6-f complex in photosystem I. Has antiviral activity against Potato virus Y (strain N). The chain is Plastocyanin (PETE) from Ulva pertusa (Sea lettuce).